The primary structure comprises 340 residues: Protein-arginine kinase (340 aa).

The 228-residue stretch at 14–241 (IVLSSRIRLA…YQIINQEKLA (228 aa)) folds into the Phosphagen kinase C-terminal domain. ATP-binding positions include 17–21 (SSRIR), R112, 163–167 (RASVM), and 194–199 (RGIYGE).

The protein belongs to the ATP:guanido phosphotransferase family.

It carries out the reaction L-arginyl-[protein] + ATP = N(omega)-phospho-L-arginyl-[protein] + ADP + H(+). In terms of biological role, catalyzes the specific phosphorylation of arginine residues in proteins. This chain is Protein-arginine kinase, found in Clostridium tetani (strain Massachusetts / E88).